A 185-amino-acid chain; its full sequence is MISSNDFRPGVSIELEGSIWKVVEFLHVKPGKGSAFVRTTLKNVQTGKVLERTFRAGETVPQATIEKRTMQHTYKEGEQFVFMDMETYEEARLNPEQLGDGAKYIKENMEVNVLYWGEQVLNIELPTSVILEVTDTDPGVKGDTATGGSKPAIVETGAQIMVPLFISIGERIKVDTRDGSYLGRE.

The protein belongs to the elongation factor P family.

It is found in the cytoplasm. Its pathway is protein biosynthesis; polypeptide chain elongation. Functionally, involved in peptide bond synthesis. Stimulates efficient translation and peptide-bond synthesis on native or reconstituted 70S ribosomes in vitro. Probably functions indirectly by altering the affinity of the ribosome for aminoacyl-tRNA, thus increasing their reactivity as acceptors for peptidyl transferase. The sequence is that of Elongation factor P from Gloeothece citriformis (strain PCC 7424) (Cyanothece sp. (strain PCC 7424)).